The following is a 126-amino-acid chain: Large ribosomal subunit protein bL17 (126 aa).

The protein belongs to the bacterial ribosomal protein bL17 family. In terms of assembly, part of the 50S ribosomal subunit. Contacts protein L32.

This chain is Large ribosomal subunit protein bL17, found in Aliivibrio fischeri (strain ATCC 700601 / ES114) (Vibrio fischeri).